The primary structure comprises 276 residues: Pantothenate synthetase (276 aa).

Position 27-34 (27-34) interacts with ATP; the sequence is MGALHKGH. His-34 acts as the Proton donor in catalysis. Gln-58 lines the (R)-pantoate pocket. Residue Gln-58 coordinates beta-alanine. 147–150 provides a ligand contact to ATP; the sequence is GKKD. Gln-153 contributes to the (R)-pantoate binding site. ATP-binding positions include Val-176 and 184-187; that span reads LSSR.

The protein belongs to the pantothenate synthetase family. Homodimer.

The protein resides in the cytoplasm. It catalyses the reaction (R)-pantoate + beta-alanine + ATP = (R)-pantothenate + AMP + diphosphate + H(+). It functions in the pathway cofactor biosynthesis; (R)-pantothenate biosynthesis; (R)-pantothenate from (R)-pantoate and beta-alanine: step 1/1. Its function is as follows. Catalyzes the condensation of pantoate with beta-alanine in an ATP-dependent reaction via a pantoyl-adenylate intermediate. This chain is Pantothenate synthetase, found in Helicobacter acinonychis (strain Sheeba).